The chain runs to 449 residues: Signal recognition particle protein (449 aa).

GTP contacts are provided by residues 109-116 (GLQGSGKT), 191-195 (DTAGR), and 249-252 (SRID).

The protein belongs to the GTP-binding SRP family. SRP54 subfamily. In terms of assembly, part of the signal recognition particle protein translocation system, which is composed of SRP and FtsY. SRP is a ribonucleoprotein composed of Ffh and a 4.5S RNA molecule.

Its subcellular location is the cytoplasm. The enzyme catalyses GTP + H2O = GDP + phosphate + H(+). In terms of biological role, involved in targeting and insertion of nascent membrane proteins into the cytoplasmic membrane. Binds to the hydrophobic signal sequence of the ribosome-nascent chain (RNC) as it emerges from the ribosomes. The SRP-RNC complex is then targeted to the cytoplasmic membrane where it interacts with the SRP receptor FtsY. Interaction with FtsY leads to the transfer of the RNC complex to the Sec translocase for insertion into the membrane, the hydrolysis of GTP by both Ffh and FtsY, and the dissociation of the SRP-FtsY complex into the individual components. The sequence is that of Signal recognition particle protein from Rickettsia bellii (strain RML369-C).